Consider the following 25-residue polypeptide: M-poneritoxin-Nc2a (25 aa).

Belongs to the ponericin-L family. As to expression, expressed by the venom gland.

It localises to the secreted. It is found in the target cell membrane. Its function is as follows. Membrane-perturbating peptide with multiple activities. It is insecticidal, since it induces reversible paralysis in insects (L.cuprina) after 1 hour, but fails to kill them. It shows moderate antibacterial activity against some Gram-positive and Gram-negative bacteria. It is also antiparasitic, since it moderately inhibits the larval development of the major pathogenic nematode of ruminants (H.contortus, IC(50)=23.2 uM), but fails to reduce the motility of adult males of the other nematode B.malayi. It also shows moderate cytotoxic activity against HEK293 cells (EC(50)=48-57 uM) but does not induce hemolysis in human erythrocytes. It also causes a moderate increase in intracellular calcium concentration on neuronal and epithelial cell lines, which supports a non-specific membrane perturbation mechanism of action. The sequence is that of M-poneritoxin-Nc2a from Neoponera commutata (Large hunting ant).